The sequence spans 1248 residues: Bifunctional autolysin (1248 aa).

A signal peptide spans 1 to 29 (MAKKFNYKLPSMVALTLVGSAVTAHQVQA). The disordered stretch occupies residues 103–134 (GDTRANQSATTNNTQPVAKSTSTTAPKTNTNV). The N-acetylmuramoyl-L-alanine amidase stretch occupies residues 191-767 (ASAQPRSVAA…AVAQPKTAVK (577 aa)). 7 consecutive GW domains span residues 435–509 (TVAA…YNTA), 511–585 (SPVN…DTAK), 604–678 (TVSS…YNNA), 680–754 (SPVN…VPAA), 776–851 (TTQT…VQNL), 853–928 (KEVK…APTA), and 935–1009 (AAKD…KELI). The interval 768–1248 (AYTVTKPQTT…GKYFDIPQYK (481 aa)) is endo-beta-N-acetylglucosaminidase.

This sequence in the N-terminal section; belongs to the N-acetylmuramoyl-L-alanine amidase 2 family. It in the C-terminal section; belongs to the glycosyl hydrolase 73 family. In terms of assembly, oligomer; forms a ring structure at the cell surface which is important for efficient partitioning of daughter cells after cell division. Undergoes proteolytic processing to generate the two extracellular lytic enzymes, probably at the septal region on the cell surface.

The protein resides in the secreted. The catalysed reaction is Hydrolyzes the link between N-acetylmuramoyl residues and L-amino acid residues in certain cell-wall glycopeptides.. It catalyses the reaction an N(4)-(oligosaccharide-(1-&gt;3)-[oligosaccharide-(1-&gt;6)]-beta-D-Man-(1-&gt;4)-beta-D-GlcNAc-(1-&gt;4)-alpha-D-GlcNAc)-L-asparaginyl-[protein] + H2O = an oligosaccharide-(1-&gt;3)-[oligosaccharide-(1-&gt;6)]-beta-D-Man-(1-&gt;4)-D-GlcNAc + N(4)-(N-acetyl-beta-D-glucosaminyl)-L-asparaginyl-[protein]. Its function is as follows. Endohydrolysis of the di-N-acetylchitobiosyl unit in high-mannose glycopeptides and glycoproteins containing the -[(Man)5(GlcNAc)2]-Asn structure. One N-acetyl-D-glucosamine residue remains attached to the protein; the rest of the oligosaccharide is released intact. Cleaves the peptidoglycan connecting the daughter cells at the end of the cell division cycle, resulting in the separation of the two newly divided cells. Acts as an autolysin in penicillin-induced lysis. The polypeptide is Bifunctional autolysin (atl) (Staphylococcus aureus (strain Mu50 / ATCC 700699)).